We begin with the raw amino-acid sequence, 137 residues long: Large ribosomal subunit protein uL16 (137 aa).

Positions 1–21 are enriched in basic residues; it reads MLSPKKVKFRKRQKGRLKGKA. The tract at residues 1–22 is disordered; sequence MLSPKKVKFRKRQKGRLKGKAQ.

Belongs to the universal ribosomal protein uL16 family. Part of the 50S ribosomal subunit.

Binds 23S rRNA and is also seen to make contacts with the A and possibly P site tRNAs. The protein is Large ribosomal subunit protein uL16 of Maridesulfovibrio salexigens (strain ATCC 14822 / DSM 2638 / NCIMB 8403 / VKM B-1763) (Desulfovibrio salexigens).